The chain runs to 60 residues: Potassium channel toxin alpha-KTx 29.1 (60 aa).

The N-terminal stretch at 1 to 28 (MKSVCGVLIILVVLTTMLSISTFSTVGA) is a signal peptide. Disulfide bonds link Cys-32-Cys-51, Cys-40-Cys-56, and Cys-44-Cys-58.

The protein belongs to the short scorpion toxin superfamily. Potassium channel inhibitor family. Alpha-KTx 29 subfamily. In terms of tissue distribution, expressed by the venom gland.

It localises to the secreted. Its function is as follows. Weakly inhibits the Kv1.3/KCNA3 channel (1 uM of the toxin inhibits currents by 13.2%) and Kv7.1/KCNQ1 channel (10 uM of the toxin inhibits currents by 27.7%). The chain is Potassium channel toxin alpha-KTx 29.1 from Lychas mucronatus (Chinese swimming scorpion).